The sequence spans 163 residues: uncharacterized protein (163 aa).

4 helical membrane passes run 19-39 (GPPSVICIRLLVGLVFLSEGI), 63-83 (FFADLDGVVEIVCGTLVLLGL), 87-107 (VAAVPLLIDMVGAIVLTKLRA), and 119-139 (FWGMAHAARTDLSMLLGLIFL).

Belongs to the DoxX family.

Its subcellular location is the cell membrane. This is an uncharacterized protein from Mycobacterium tuberculosis (strain ATCC 25618 / H37Rv).